The sequence spans 417 residues: Serine hydroxymethyltransferase (417 aa).

Residues L121 and 125 to 127 (GHL) each bind (6S)-5,6,7,8-tetrahydrofolate. At K229 the chain carries N6-(pyridoxal phosphate)lysine. 355–357 (SPF) contacts (6S)-5,6,7,8-tetrahydrofolate.

This sequence belongs to the SHMT family. As to quaternary structure, homodimer. Pyridoxal 5'-phosphate serves as cofactor.

It is found in the cytoplasm. The enzyme catalyses (6R)-5,10-methylene-5,6,7,8-tetrahydrofolate + glycine + H2O = (6S)-5,6,7,8-tetrahydrofolate + L-serine. It functions in the pathway one-carbon metabolism; tetrahydrofolate interconversion. The protein operates within amino-acid biosynthesis; glycine biosynthesis; glycine from L-serine: step 1/1. Functionally, catalyzes the reversible interconversion of serine and glycine with tetrahydrofolate (THF) serving as the one-carbon carrier. This reaction serves as the major source of one-carbon groups required for the biosynthesis of purines, thymidylate, methionine, and other important biomolecules. Also exhibits THF-independent aldolase activity toward beta-hydroxyamino acids, producing glycine and aldehydes, via a retro-aldol mechanism. This Edwardsiella ictaluri (strain 93-146) protein is Serine hydroxymethyltransferase.